The sequence spans 203 residues: Thymidylate kinase (203 aa).

7-14 (GGEGAGKT) provides a ligand contact to ATP.

This sequence belongs to the thymidylate kinase family.

It carries out the reaction dTMP + ATP = dTDP + ADP. Phosphorylation of dTMP to form dTDP in both de novo and salvage pathways of dTTP synthesis. This Chlamydia trachomatis serovar L2 (strain ATCC VR-902B / DSM 19102 / 434/Bu) protein is Thymidylate kinase.